Consider the following 372-residue polypeptide: Cytochrome b (372 aa).

Helical transmembrane passes span 25-45, 69-90, 105-125, and 170-190; these read FGSM…FLAI, WIMQ…YIHI, WLSG…GYVL, and FFAL…IHII. 2 residues coordinate heme b: His75 and His89. Heme b-binding residues include His174 and His188. His193 lines the a ubiquinone pocket. The next 4 helical transmembrane spans lie at 218–238, 280–300, 312–332, and 339–358; these read YKDM…LSFL, LGGT…PFTH, LSQT…WTAT, and FITI…IMTP.

It belongs to the cytochrome b family. In terms of assembly, the cytochrome bc1 complex contains 3 respiratory subunits (MT-CYB, CYC1 and UQCRFS1), 2 core proteins (UQCRC1 and UQCRC2) and probably 6 low-molecular weight proteins. The cofactor is heme b.

Its subcellular location is the mitochondrion inner membrane. In terms of biological role, component of the ubiquinol-cytochrome c reductase complex (complex III or cytochrome b-c1 complex) that is part of the mitochondrial respiratory chain. The b-c1 complex mediates electron transfer from ubiquinol to cytochrome c. Contributes to the generation of a proton gradient across the mitochondrial membrane that is then used for ATP synthesis. This is Cytochrome b (MT-CYB) from Aspidelaps scutatus (Shield-nose snake).